Reading from the N-terminus, the 302-residue chain is Glycine N-acyltransferase-like protein 1 (302 aa).

Belongs to the glycine N-acyltransferase family. Expressed in liver and kidney and, at lower levels, in pancreas, testis, ovary and stomach.

The catalysed reaction is an acyl-CoA + L-glutamine = an N(2)-acyl-L-glutamine + CoA + H(+). Functionally, acyltransferase which transfers an acyl group to the N-terminus of glutamine. Can use phenylacetyl-CoA as an acyl donor. The protein is Glycine N-acyltransferase-like protein 1 of Homo sapiens (Human).